The chain runs to 826 residues: Ferric-pyoverdine M114 receptor PbuA (826 aa).

The signal sequence occupies residues 1-44; that stretch reads MSASRFMLRPLTRALLMHGATRTRLAGTGLGLALTLTAAPYVQA. Positions 110–119 match the TonB box motif; the sequence is DGNTVTVLGP. The TBDR plug domain maps to 160–271; it reads SLKETPQSVT…TAGGVNFVRK (112 aa). The TBDR beta-barrel domain occupies 276–826; that stretch reads TAHTQLSLSA…NFVMSVKADF (551 aa). A TonB C-terminal box motif is present at residues 809–826; the sequence is GNFYGDPRNFVMSVKADF.

Belongs to the TonB-dependent receptor family.

The protein resides in the cell outer membrane. Its function is as follows. Specific receptor for the siderophore ferric pyoverdine (pseudobactin) M114. The chain is Ferric-pyoverdine M114 receptor PbuA (pbuA) from Pseudomonas sp. (strain M114).